Reading from the N-terminus, the 186-residue chain is Superoxide dismutase [Cu-Zn] (186 aa).

Positions methionine 1 to alanine 20 are cleaved as a signal peptide. The Cu cation site is built by histidine 79, histidine 81, and histidine 104. A disulfide bridge connects residues cysteine 86 and cysteine 182. Positions 104, 113, 122, and 125 each coordinate Zn(2+). Position 160 (histidine 160) interacts with Cu cation.

It belongs to the Cu-Zn superoxide dismutase family. As to quaternary structure, homodimer. Cu cation serves as cofactor. The cofactor is Zn(2+).

The protein resides in the periplasm. The enzyme catalyses 2 superoxide + 2 H(+) = H2O2 + O2. Its function is as follows. Destroys radicals which are normally produced within the cells and which are toxic to biological systems. This chain is Superoxide dismutase [Cu-Zn] (sodC), found in Pasteurella multocida (strain Pm70).